The chain runs to 300 residues: Ribonuclease HIII (300 aa).

Positions 83 to 300 (IPIIGSDEVG…THKAQALLTK (218 aa)) constitute an RNase H type-2 domain. Asp89, Glu90, and Asp194 together coordinate a divalent metal cation.

The protein belongs to the RNase HII family. RnhC subfamily. Requires Mn(2+) as cofactor. Mg(2+) is required as a cofactor.

Its subcellular location is the cytoplasm. It catalyses the reaction Endonucleolytic cleavage to 5'-phosphomonoester.. Functionally, endonuclease that specifically degrades the RNA of RNA-DNA hybrids. The protein is Ribonuclease HIII of Streptococcus pyogenes serotype M1.